Reading from the N-terminus, the 221-residue chain is Adenylate kinase (221 aa).

An ATP-binding site is contributed by 10–15 (GAGKGT). The segment at 30–59 (STGDMLRAAVKAGTPLGLEAKRFMDAGELV) is NMP. Residues T31, R36, 57–59 (ELV), 85–88 (GFPR), and Q92 each bind AMP. The segment at 122 to 159 (GRRSHAASGRTYHVKFNPPKVEGLDDVTGEPLIQRDDD) is LID. Residues R123 and 132 to 133 (TY) each bind ATP. 2 residues coordinate AMP: R156 and R167. G207 is an ATP binding site.

The protein belongs to the adenylate kinase family. In terms of assembly, monomer.

The protein localises to the cytoplasm. It catalyses the reaction AMP + ATP = 2 ADP. It functions in the pathway purine metabolism; AMP biosynthesis via salvage pathway; AMP from ADP: step 1/1. In terms of biological role, catalyzes the reversible transfer of the terminal phosphate group between ATP and AMP. Plays an important role in cellular energy homeostasis and in adenine nucleotide metabolism. This Paraburkholderia xenovorans (strain LB400) protein is Adenylate kinase.